Consider the following 145-residue polypeptide: Ribonuclease H (145 aa).

Residues 1–142 (MDTPVYLYTD…ADDLANRGAA (142 aa)) form the RNase H type-1 domain. D10, E48, D70, and D134 together coordinate Mg(2+).

It belongs to the RNase H family. Monomer. Mg(2+) serves as cofactor.

The protein localises to the cytoplasm. The enzyme catalyses Endonucleolytic cleavage to 5'-phosphomonoester.. In terms of biological role, endonuclease that specifically degrades the RNA of RNA-DNA hybrids. In Neisseria gonorrhoeae (strain ATCC 700825 / FA 1090), this protein is Ribonuclease H.